The chain runs to 510 residues: Light-independent protochlorophyllide reductase subunit B (510 aa).

D36 is a [4Fe-4S] cluster binding site. Catalysis depends on D296, which acts as the Proton donor. 431 to 432 (GM) lines the substrate pocket.

This sequence belongs to the ChlB/BchB/BchZ family. Protochlorophyllide reductase is composed of three subunits; ChlL, ChlN and ChlB. Forms a heterotetramer of two ChlB and two ChlN subunits. [4Fe-4S] cluster is required as a cofactor.

It localises to the plastid. The protein resides in the chloroplast. The catalysed reaction is chlorophyllide a + oxidized 2[4Fe-4S]-[ferredoxin] + 2 ADP + 2 phosphate = protochlorophyllide a + reduced 2[4Fe-4S]-[ferredoxin] + 2 ATP + 2 H2O. The protein operates within porphyrin-containing compound metabolism; chlorophyll biosynthesis (light-independent). Component of the dark-operative protochlorophyllide reductase (DPOR) that uses Mg-ATP and reduced ferredoxin to reduce ring D of protochlorophyllide (Pchlide) to form chlorophyllide a (Chlide). This reaction is light-independent. The NB-protein (ChlN-ChlB) is the catalytic component of the complex. This chain is Light-independent protochlorophyllide reductase subunit B, found in Physcomitrium patens (Spreading-leaved earth moss).